The chain runs to 437 residues: MKYTTQMDAARKGIITKEMEIVSKKENMDIEILREKMAKGQIVIPANKNHKSLDPEGIGSGLKTKINVNLGISRDCPNVDAELEKVKIAIDMKAEAIMDLSSFGKTEEFRQKLVNMSTAMIGTVPIYDAVGFYDKELKDITEKEFLDVVRKHGEDGVDFVTIHAGLNRDTVKTFKKNTRVTNIVSRGGSLLYAWMELNNKENPFYEYYDELLEICAAYDMTISLGDALRPGSIADGTDASQIAELMVLGELTKRAWEKNVQVIIEGPGHMKLNEIEANVILEKKLCHGAPFYVLGPLVTDIAPGYDHITSAIGGAIAASHGVDFLCYVTPAEHLRLPTLEDMKEGIIASKIAAHAGDLAKGVQGADEWDLKMSKARQKLDWEEMFSLSIDDEKARRYRKESSPEHEDSCTMCGKMCSMRNMNRIMEGKDINILRSED.

Residues N69, M98, Y127, H163, 185–187 (SRG), 226–229 (DALR), and E265 contribute to the substrate site. Residue H269 coordinates Zn(2+). Y292 serves as a coordination point for substrate. Zn(2+) is bound at residue H333. Positions 409, 412, and 416 each coordinate [4Fe-4S] cluster.

It belongs to the ThiC family. [4Fe-4S] cluster is required as a cofactor.

The catalysed reaction is 5-amino-1-(5-phospho-beta-D-ribosyl)imidazole + S-adenosyl-L-methionine = 4-amino-2-methyl-5-(phosphooxymethyl)pyrimidine + CO + 5'-deoxyadenosine + formate + L-methionine + 3 H(+). Its pathway is cofactor biosynthesis; thiamine diphosphate biosynthesis. Catalyzes the synthesis of the hydroxymethylpyrimidine phosphate (HMP-P) moiety of thiamine from aminoimidazole ribotide (AIR) in a radical S-adenosyl-L-methionine (SAM)-dependent reaction. The chain is Phosphomethylpyrimidine synthase from Alkaliphilus oremlandii (strain OhILAs) (Clostridium oremlandii (strain OhILAs)).